Consider the following 569-residue polypeptide: Vacuolar protein sorting-associated protein 53 B (569 aa).

3 coiled-coil regions span residues 53 to 90, 125 to 145, and 295 to 316; these read TRAK…VQDI, QVMT…AINE, and KEKS…FERE.

This sequence belongs to the VPS53 family. In terms of assembly, component of the Golgi-associated retrograde protein (GARP) complex.

The protein resides in the cytoplasm. It localises to the golgi apparatus. It is found in the trans-Golgi network membrane. The protein localises to the endosome membrane. In terms of biological role, involved in retrograde transport from early and late endosomes to late Golgi, leading to the membrane fusion between late Golgi and endosomal vesicles. The polypeptide is Vacuolar protein sorting-associated protein 53 B (Arabidopsis thaliana (Mouse-ear cress)).